Reading from the N-terminus, the 221-residue chain is Germin-like protein subfamily 1 member 15 (221 aa).

The signal sequence occupies residues 1-21; that stretch reads MKVSMSLILITFWALVTIAKA. Residues cysteine 31 and cysteine 48 are joined by a disulfide bond. One can recognise a Cupin type-1 domain in the interval 62 to 213; it reads SGLNQAGITN…AFQLDVNVVK (152 aa). Asparagine 77 is a glycosylation site (N-linked (GlcNAc...) asparagine). Histidine 110, histidine 112, glutamate 117, and histidine 159 together coordinate Mn(2+).

Belongs to the germin family. As to quaternary structure, oligomer (believed to be a pentamer but probably hexamer).

The protein resides in the secreted. The protein localises to the extracellular space. It localises to the apoplast. May play a role in plant defense. Probably has no oxalate oxidase activity even if the active site is conserved. The polypeptide is Germin-like protein subfamily 1 member 15 (Arabidopsis thaliana (Mouse-ear cress)).